The primary structure comprises 468 residues: Probable acid phosphatase DIA3 (468 aa).

An N-terminal signal peptide occupies residues M1–S20. The Nucleophile role is filled by H76. Residues N98, N163, N193, N202, N238, N251, and N316 are each glycosylated (N-linked (GlcNAc...) asparagine). The active-site Proton donor is D339. N-linked (GlcNAc...) asparagine glycosylation is found at N357, N391, N457, and N462.

This sequence belongs to the histidine acid phosphatase family.

It catalyses the reaction a phosphate monoester + H2O = an alcohol + phosphate. This Saccharomyces cerevisiae (strain ATCC 204508 / S288c) (Baker's yeast) protein is Probable acid phosphatase DIA3 (DIA3).